The chain runs to 212 residues: ATP phosphoribosyltransferase (212 aa).

It belongs to the ATP phosphoribosyltransferase family. Short subfamily. Heteromultimer composed of HisG and HisZ subunits.

Its subcellular location is the cytoplasm. It carries out the reaction 1-(5-phospho-beta-D-ribosyl)-ATP + diphosphate = 5-phospho-alpha-D-ribose 1-diphosphate + ATP. Its pathway is amino-acid biosynthesis; L-histidine biosynthesis; L-histidine from 5-phospho-alpha-D-ribose 1-diphosphate: step 1/9. In terms of biological role, catalyzes the condensation of ATP and 5-phosphoribose 1-diphosphate to form N'-(5'-phosphoribosyl)-ATP (PR-ATP). Has a crucial role in the pathway because the rate of histidine biosynthesis seems to be controlled primarily by regulation of HisG enzymatic activity. The protein is ATP phosphoribosyltransferase of Prochlorococcus marinus (strain AS9601).